The primary structure comprises 612 residues: Threonine--tRNA ligase (612 aa).

The segment at 218-509 (DHRKLGVELG…LSEHFGGNFP (292 aa)) is catalytic. Zn(2+) is bound by residues Cys310, His361, and His486.

It belongs to the class-II aminoacyl-tRNA synthetase family. In terms of assembly, homodimer. The cofactor is Zn(2+).

Its subcellular location is the cytoplasm. The catalysed reaction is tRNA(Thr) + L-threonine + ATP = L-threonyl-tRNA(Thr) + AMP + diphosphate + H(+). Its function is as follows. Catalyzes the attachment of threonine to tRNA(Thr) in a two-step reaction: L-threonine is first activated by ATP to form Thr-AMP and then transferred to the acceptor end of tRNA(Thr). Also edits incorrectly charged L-seryl-tRNA(Thr). This chain is Threonine--tRNA ligase, found in Helicobacter pylori (strain ATCC 700392 / 26695) (Campylobacter pylori).